Reading from the N-terminus, the 106-residue chain is Small ribosomal subunit protein bS20 (106 aa).

A disordered region spans residues 1-32 (MAQKKPKRNLSALKRHRQSLKRRLRNKAKKSA).

In terms of assembly, part of the 30S ribosomal subunit.

In terms of biological role, one of the primary rRNA binding proteins, it binds directly to 16S rRNA where it nucleates assembly of the bottom of the body of the 30S subunit, by binding to several RNA helices of the 16S rRNA. The polypeptide is Small ribosomal subunit protein bS20 (rpsT) (Thermus thermophilus (strain ATCC 27634 / DSM 579 / HB8)).